Reading from the N-terminus, the 130-residue chain is MARVKRAVNAHKKRRVILERAEGYRGQRSRLYRKAKEQVTHSLVYAYRDRRQKKGDFRRLWIQRINAASRANGLTYNRFIQGLGLAGVEVDRRILAELAVNEPATFTALVETAKKALPADTSAPKADAAA.

It belongs to the bacterial ribosomal protein bL20 family.

Binds directly to 23S ribosomal RNA and is necessary for the in vitro assembly process of the 50S ribosomal subunit. It is not involved in the protein synthesizing functions of that subunit. This is Large ribosomal subunit protein bL20 from Leifsonia xyli subsp. xyli (strain CTCB07).